The sequence spans 261 residues: RING finger and CHY zinc finger domain-containing protein 1 (261 aa).

The CHY-type zinc-finger motif lies at 13 to 80 (LAQGPRGCEH…AQQTCEDCST (68 aa)). Zn(2+) contacts are provided by cysteine 20, histidine 22, cysteine 33, cysteine 34, cysteine 40, cysteine 43, histidine 44, histidine 50, cysteine 62, cysteine 65, cysteine 75, cysteine 78, cysteine 87, cysteine 90, histidine 101, cysteine 102, cysteine 105, cysteine 108, histidine 118, cysteine 119, cysteine 122, cysteine 125, histidine 134, and cysteine 136. The CTCHY-type zinc finger occupies 82–144 (FGEYYCSICH…KCIENVSRQN (63 aa)). Residues 145-189 (CPICLEDIHTSRVVAHVLPCGHLLHRTCYEEMLKEGYRCPLCMHS) form an RING-type zinc finger.

As to quaternary structure, monomer and homodimer. Interacts with AR, MDM2, KAT5, PLAG1, PLAGL2, COPE, UBE2D2 and GORAB/NTKLBP1. In terms of processing, subject to ubiquitination and proteasomal degradation. Interaction with PLAGL2 or KAT5 enhances protein stability. In terms of tissue distribution, detected in testis, liver, kidney and heart.

It is found in the nucleus. The protein localises to the nucleus speckle. The protein resides in the cytoplasm. The catalysed reaction is S-ubiquitinyl-[E2 ubiquitin-conjugating enzyme]-L-cysteine + [acceptor protein]-L-lysine = [E2 ubiquitin-conjugating enzyme]-L-cysteine + N(6)-ubiquitinyl-[acceptor protein]-L-lysine.. The protein operates within protein modification; protein ubiquitination. Its function is as follows. E3 ubiquitin-protein ligase that mediates ubiquitination of target proteins, including p53/TP53, TP73, HDAC1 and CDKN1B. Mediates ubiquitination and degradation of p53/TP53; preferentially acts on tetrameric p53/TP53. Catalyzes monoubiquitinates the translesion DNA polymerase POLH. Involved in the ribosome-associated quality control (RQC) pathway, which mediates the extraction of incompletely synthesized nascent chains from stalled ribosomes: RCHY1 acts downstream of NEMF and recognizes CAT tails associated with stalled nascent chains, leading to their ubiquitination and degradation. In Mus musculus (Mouse), this protein is RING finger and CHY zinc finger domain-containing protein 1 (Rchy1).